A 504-amino-acid chain; its full sequence is Maturase K (504 aa).

It belongs to the intron maturase 2 family. MatK subfamily.

The protein localises to the plastid. It localises to the chloroplast. Usually encoded in the trnK tRNA gene intron. Probably assists in splicing its own and other chloroplast group II introns. The polypeptide is Maturase K (Impatiens capensis (Spotted jewelweed)).